The chain runs to 369 residues: MTKAPVTPERDIAASGPYALAVDAMGGDRAPDIVLAGLDLAADRHPKARILLIGDEALLRPALAKYPKAARLCDIRHAAASISMDMKPTAALRVRGSSMRMAMEAVAAGEACGVVSAGNSGAMLALAKIIVKALPGISRPAMIAVEPSARGDIVMLDLGANIACDARNLVEFAIMGEAFAQAALGLPSPTIGLLNVGSEELKGDDRLRQASERLRASPLAPQFHGFVEGHDITAGTTDVVVTDGFTGNVALKTGEGALKLAFSLLKRVFQTNLLTRLGYLLVKPGLERMREWIDPRRYNGALFVGLNGIVVKSHGGADGESFAAAVDVAMDAVTHHLNDKIRARLEQLGMGAPEPVAPAAAKAAPEPVS.

The protein belongs to the PlsX family. In terms of assembly, homodimer. Probably interacts with PlsY.

The protein localises to the cytoplasm. It carries out the reaction a fatty acyl-[ACP] + phosphate = an acyl phosphate + holo-[ACP]. It participates in lipid metabolism; phospholipid metabolism. Functionally, catalyzes the reversible formation of acyl-phosphate (acyl-PO(4)) from acyl-[acyl-carrier-protein] (acyl-ACP). This enzyme utilizes acyl-ACP as fatty acyl donor, but not acyl-CoA. The sequence is that of Phosphate acyltransferase from Gluconobacter oxydans (strain 621H) (Gluconobacter suboxydans).